A 299-amino-acid polypeptide reads, in one-letter code: MNSKSSARAAIVDTVEAVKKRKYISIDEGTLNNVVEKERKFLKQFLSGRQNLRIAARVFTPCELLAPELENLGMLMYRFETDVDNPKILFVGLFFLCSNAFNVSTCVRTALTAMYTNSMVDNVLSMINTCRYLEDKVSLFGVTSLVSCGSSCLLSCVMQGNVYDVNKENIYGLTVLKEIILEPDWEPRQHSTQYVYVVHVYKEVLAKLQYGIYVVLTSFQNEDLIVDILRQYFEKERFLFLNYLINSNTTLSYFGSVQRIGRCATEDIKSGFLQYRGITLSVIKLENIFVDLSEKKVFV.

It belongs to the herpesviridae TRX1 protein family. In terms of assembly, interacts with TRX2, MCP and capsid vertex component 2/CVC2.

The protein resides in the virion. It localises to the host nucleus. Structural component of the T=16 icosahedral capsid. The capsid is composed of pentamers and hexamers of major capsid protein/MCP, which are linked together by heterotrimers called triplexes. These triplexes are formed by a single molecule of triplex protein 1/TRX1 and two copies of triplex protein 2/TRX2. Additionally, TRX1 is required for efficient transport of TRX2 to the nucleus, which is the site of capsid assembly. This chain is Triplex capsid protein 1, found in Homo sapiens (Human).